The sequence spans 298 residues: Triosephosphate isomerase, chloroplastic (298 aa).

The span at 1–18 (MAARRPSPPPASPPPPRP) shows a compositional bias: pro residues. Residues 1-32 (MAARRPSPPPASPPPPRPRSTTTTRTTSSASA) form a disordered region. The N-terminal 43 residues, 1–43 (MAARRPSPPPASPPPPRPRSTTTTRTTSSASAAPAAAQRLVAM), are a transit peptide targeting the chloroplast. A compositionally biased stretch (low complexity) spans 19–32 (RSTTTTRTTSSASA). 2 residues coordinate substrate: asparagine 54 and lysine 56. The Electrophile role is filled by histidine 138. Cysteine 186 bears the Cysteine derivative mark. Glutamate 208 functions as the Proton acceptor in the catalytic mechanism.

This sequence belongs to the triosephosphate isomerase family. In terms of assembly, homodimer.

It localises to the plastid. Its subcellular location is the chloroplast. It carries out the reaction D-glyceraldehyde 3-phosphate = dihydroxyacetone phosphate. It functions in the pathway carbohydrate biosynthesis; Calvin cycle. The chain is Triosephosphate isomerase, chloroplastic from Secale cereale (Rye).